A 154-amino-acid chain; its full sequence is Ribonuclease H (154 aa).

The 141-residue stretch at 1–141 folds into the RNase H type-1 domain; it reads MKRIEAYTDG…ADELAREGME (141 aa). Mg(2+)-binding residues include Asp9, Glu47, Asp69, and Asp133.

Belongs to the RNase H family. In terms of assembly, monomer. The cofactor is Mg(2+).

The protein localises to the cytoplasm. It carries out the reaction Endonucleolytic cleavage to 5'-phosphomonoester.. Functionally, endonuclease that specifically degrades the RNA of RNA-DNA hybrids. This chain is Ribonuclease H, found in Brucella anthropi (strain ATCC 49188 / DSM 6882 / CCUG 24695 / JCM 21032 / LMG 3331 / NBRC 15819 / NCTC 12168 / Alc 37) (Ochrobactrum anthropi).